We begin with the raw amino-acid sequence, 373 residues long: Phospho-N-acetylmuramoyl-pentapeptide-transferase (373 aa).

A run of 10 helical transmembrane segments spans residues 28-48 (LLTVITSLAFSIILGPRTIAY), 72-92 (TPTMGGVLILTSIGFSTLCWA), 94-114 (LANPYVWILMVVMVIFGAVGW), 135-155 (YFWLSVGALFVGSSLYYIASQ), 177-197 (IVPLSALPLGLGFIIFTYFVI), 212-232 (GLAILPVVFVAAGLGVFSYVS), 252-272 (VTIVCAAMIGSGLGFLWYNAH), 276-296 (VFMGDVGALALGAMLGTIAVM), 301-321 (IAFAIMGGLFVAEALSVILQV), and 350-370 (QVVVRFWIIAILLVVLGLMTL).

This sequence belongs to the glycosyltransferase 4 family. MraY subfamily. Mg(2+) is required as a cofactor.

The protein resides in the cell inner membrane. The catalysed reaction is UDP-N-acetyl-alpha-D-muramoyl-L-alanyl-gamma-D-glutamyl-meso-2,6-diaminopimeloyl-D-alanyl-D-alanine + di-trans,octa-cis-undecaprenyl phosphate = di-trans,octa-cis-undecaprenyl diphospho-N-acetyl-alpha-D-muramoyl-L-alanyl-D-glutamyl-meso-2,6-diaminopimeloyl-D-alanyl-D-alanine + UMP. It participates in cell wall biogenesis; peptidoglycan biosynthesis. Functionally, catalyzes the initial step of the lipid cycle reactions in the biosynthesis of the cell wall peptidoglycan: transfers peptidoglycan precursor phospho-MurNAc-pentapeptide from UDP-MurNAc-pentapeptide onto the lipid carrier undecaprenyl phosphate, yielding undecaprenyl-pyrophosphoryl-MurNAc-pentapeptide, known as lipid I. This chain is Phospho-N-acetylmuramoyl-pentapeptide-transferase, found in Psychrobacter sp. (strain PRwf-1).